Consider the following 128-residue polypeptide: Ribosome-binding factor A (128 aa).

The protein belongs to the RbfA family. Monomer. Binds 30S ribosomal subunits, but not 50S ribosomal subunits or 70S ribosomes.

The protein localises to the cytoplasm. One of several proteins that assist in the late maturation steps of the functional core of the 30S ribosomal subunit. Associates with free 30S ribosomal subunits (but not with 30S subunits that are part of 70S ribosomes or polysomes). Required for efficient processing of 16S rRNA. May interact with the 5'-terminal helix region of 16S rRNA. This Idiomarina loihiensis (strain ATCC BAA-735 / DSM 15497 / L2-TR) protein is Ribosome-binding factor A.